A 381-amino-acid chain; its full sequence is Transcription termination factor 4, mitochondrial (381 aa).

The N-terminal 42 residues, 1-42, are a transit peptide targeting the mitochondrion; sequence MAAFGRQVLDWHRLIPLTWACMARQTPHLGEQRRTTASLLRK. MTERF repeat units lie at residues 142–172, 177–204, 209–239, 245–270, and 290–318; these read CVVL…LGLG, KRVL…LKEK, VQQV…YAYF, HPDI…YLER, and LKDI…VFKK. The tract at residues 310–327 is dimerization with NSUN4; it reads VEEFQVFKKLLAREEEES. Residues 322–381 are disordered; the sequence is REEEESESSTSDDKRASLDEDEDDDDEEDNDEDDNDEDDDDEDDDEAEDNDEDEDDDEEE. Positions 340–381 are enriched in acidic residues; it reads DEDEDDDDEEDNDEDDNDEDDDDEDDDEAEDNDEDEDDDEEE.

Belongs to the mTERF family. Heterodimer with NSUN4; this interaction may be required for NSUN4 recruitment to the mitochondrial large ribosomal subunit. Post-translationally, the mature mitochondrial protein exists in 2 forms differing at the level of their N-terminus, one is starting at residue 43 and the other at residue 48.

The protein localises to the mitochondrion. In terms of biological role, regulator of mitochondrial ribosome biogenesis and translation. Binds to mitochondrial ribosomal RNAs 16S, 12S and 7S and targets NSUN4 RNA methyltransferase to the mitochondrial large ribosomal subunit (39S). The polypeptide is Transcription termination factor 4, mitochondrial (MTERF4) (Homo sapiens (Human)).